Consider the following 174-residue polypeptide: Magnetosome protein MamT (174 aa).

Residues 1–9 (MGTPGGGRR) are Cytoplasmic-facing. A helical membrane pass occupies residues 10-28 (WMTLISITLLMVVGLGLYW). The Lumenal segment spans residues 29–174 (DELSLSAGIS…EKKSGIKWLL (146 aa)). The short motif at 87–107 (VMPGTGMPHPYVGDCIQCHLM) is the MCR (magnetochrome) 1 element. Heme contacts are provided by Cys-101, Cys-104, His-105, Cys-152, Cys-155, and His-156. The short motif at 138–158 (ILPTTRQPHPPAGRCIKCHDI) is the MCR 2 element.

The protein belongs to the magnetosome MamT family. It depends on heme as a cofactor.

It localises to the magnetosome membrane. Functionally, may play a role in magnetite crystal maturation. May transfer electrons to balance the Fe(2+)-Fe(3+) ratio during magnetite formation. This chain is Magnetosome protein MamT, found in Magnetospirillum gryphiswaldense (strain DSM 6361 / JCM 21280 / NBRC 15271 / MSR-1).